The following is a 303-amino-acid chain: Sushi domain-containing protein 6 (303 aa).

The first 39 residues, Met1–Ala39, serve as a signal peptide directing secretion. The 65-residue stretch at Ser40–Leu104 folds into the Sushi domain. The Extracellular segment spans residues Ser40–Ser120. 2 disulfides stabilise this stretch: Cys42/Cys89 and Cys74/Cys102. Residues Ile121–Leu141 traverse the membrane as a helical segment. Residues Leu142–Ala303 are Cytoplasmic-facing. Disordered regions lie at residues Val199 to Gly237 and Gly263 to Ile282.

It is found in the membrane. May play a role in growth-suppressive activity and cell death. May be involved in the production of chemokine molecules in umbilical vein endothelial cells (HUVECs) cultured in THP1 monocyte LPS-induced medium. Plays a role in preventing tumor onset. The polypeptide is Sushi domain-containing protein 6 (Homo sapiens (Human)).